The primary structure comprises 167 residues: Xanthine-guanine phosphoribosyltransferase (167 aa).

Residues 47-48 (RG), Gln-79, and 102-110 (DDLVDSGKT) each bind 5-phospho-alpha-D-ribose 1-diphosphate. Gln-79 is a GMP binding site. Asp-103 is a binding site for Mg(2+). Guanine contacts are provided by Asp-106 and Ile-149. Asp-106 and Ile-149 together coordinate xanthine. GMP is bound by residues 106 to 110 (DSGKT) and 148 to 149 (WI).

This sequence belongs to the purine/pyrimidine phosphoribosyltransferase family. XGPT subfamily. In terms of assembly, homotetramer. Requires Mg(2+) as cofactor.

It is found in the cell inner membrane. It carries out the reaction GMP + diphosphate = guanine + 5-phospho-alpha-D-ribose 1-diphosphate. It catalyses the reaction XMP + diphosphate = xanthine + 5-phospho-alpha-D-ribose 1-diphosphate. The catalysed reaction is IMP + diphosphate = hypoxanthine + 5-phospho-alpha-D-ribose 1-diphosphate. Its pathway is purine metabolism; GMP biosynthesis via salvage pathway; GMP from guanine: step 1/1. It participates in purine metabolism; XMP biosynthesis via salvage pathway; XMP from xanthine: step 1/1. Its function is as follows. Purine salvage pathway enzyme that catalyzes the transfer of the ribosyl-5-phosphate group from 5-phospho-alpha-D-ribose 1-diphosphate (PRPP) to the N9 position of the 6-oxopurines guanine and xanthine to form the corresponding ribonucleotides GMP (guanosine 5'-monophosphate) and XMP (xanthosine 5'-monophosphate), with the release of PPi. To a lesser extent, also acts on hypoxanthine. This Cereibacter sphaeroides (strain ATCC 17029 / ATH 2.4.9) (Rhodobacter sphaeroides) protein is Xanthine-guanine phosphoribosyltransferase.